We begin with the raw amino-acid sequence, 120 residues long: rRNA-processing protein CGR1 (120 aa).

Disordered stretches follow at residues 1–26 (MVNETGESQKAAKGTPVSGKVWKAEK) and 81–120 (ERREKKEENERYERLAAKMHAKKVERMRRREKRNKALKER). A coiled-coil region spans residues 47–106 (KKQKRLEDKQFKERLKALKDEKEEARQAKITMLKERREKKEENERYERLAAKMHAKKVER). The segment covering 81 to 96 (ERREKKEENERYERLA) has biased composition (basic and acidic residues). The segment covering 97–113 (AKMHAKKVERMRRREKR) has biased composition (basic residues).

The protein belongs to the CGR1 family.

It is found in the nucleus. Its subcellular location is the nucleolus. Its function is as follows. Involved in nucleolar integrity and required for processing of the pre-rRNA for the 60S ribosome subunit. This Saccharomyces cerevisiae (strain ATCC 204508 / S288c) (Baker's yeast) protein is rRNA-processing protein CGR1 (CGR1).